A 372-amino-acid chain; its full sequence is tRNA-specific 2-thiouridylase MnmA (372 aa).

ATP contacts are provided by residues 9–16 and M35; that span reads GMSGGVDS. The interaction with target base in tRNA stretch occupies residues 95–97; sequence NPD. C100 functions as the Nucleophile in the catalytic mechanism. A disulfide bridge connects residues C100 and C201. Position 124 (G124) interacts with ATP. The tract at residues 151–153 is interaction with tRNA; that stretch reads KDQ. C201 acts as the Cysteine persulfide intermediate in catalysis. The interval 317-318 is interaction with tRNA; the sequence is RY.

Belongs to the MnmA/TRMU family.

It localises to the cytoplasm. The catalysed reaction is S-sulfanyl-L-cysteinyl-[protein] + uridine(34) in tRNA + AH2 + ATP = 2-thiouridine(34) in tRNA + L-cysteinyl-[protein] + A + AMP + diphosphate + H(+). Functionally, catalyzes the 2-thiolation of uridine at the wobble position (U34) of tRNA, leading to the formation of s(2)U34. The chain is tRNA-specific 2-thiouridylase MnmA from Herminiimonas arsenicoxydans.